The chain runs to 395 residues: Nicotinate phosphoribosyltransferase (395 aa).

His-222 is subject to Phosphohistidine; by autocatalysis.

Belongs to the NAPRTase family. Post-translationally, transiently phosphorylated on a His residue during the reaction cycle. Phosphorylation strongly increases the affinity for substrates and increases the rate of nicotinate D-ribonucleotide production. Dephosphorylation regenerates the low-affinity form of the enzyme, leading to product release.

It carries out the reaction nicotinate + 5-phospho-alpha-D-ribose 1-diphosphate + ATP + H2O = nicotinate beta-D-ribonucleotide + ADP + phosphate + diphosphate. The protein operates within cofactor biosynthesis; NAD(+) biosynthesis; nicotinate D-ribonucleotide from nicotinate: step 1/1. Its function is as follows. Catalyzes the synthesis of beta-nicotinate D-ribonucleotide from nicotinate and 5-phospho-D-ribose 1-phosphate at the expense of ATP. The sequence is that of Nicotinate phosphoribosyltransferase from Polaromonas sp. (strain JS666 / ATCC BAA-500).